We begin with the raw amino-acid sequence, 211 residues long: Protein-L-isoaspartate O-methyltransferase (211 aa).

Ser-62 is an active-site residue.

Belongs to the methyltransferase superfamily. L-isoaspartyl/D-aspartyl protein methyltransferase family.

The protein resides in the cytoplasm. It carries out the reaction [protein]-L-isoaspartate + S-adenosyl-L-methionine = [protein]-L-isoaspartate alpha-methyl ester + S-adenosyl-L-homocysteine. In terms of biological role, catalyzes the methyl esterification of L-isoaspartyl residues in peptides and proteins that result from spontaneous decomposition of normal L-aspartyl and L-asparaginyl residues. It plays a role in the repair and/or degradation of damaged proteins. This is Protein-L-isoaspartate O-methyltransferase from Shewanella baltica (strain OS223).